Reading from the N-terminus, the 294-residue chain is tRNA dimethylallyltransferase (294 aa).

10 to 17 (GPTAVGKT) is an ATP binding site. 12–17 (TAVGKT) serves as a coordination point for substrate. Residues 35-38 (DSQQ) form an interaction with substrate tRNA region.

Belongs to the IPP transferase family. As to quaternary structure, monomer. It depends on Mg(2+) as a cofactor.

It carries out the reaction adenosine(37) in tRNA + dimethylallyl diphosphate = N(6)-dimethylallyladenosine(37) in tRNA + diphosphate. Catalyzes the transfer of a dimethylallyl group onto the adenine at position 37 in tRNAs that read codons beginning with uridine, leading to the formation of N6-(dimethylallyl)adenosine (i(6)A). The chain is tRNA dimethylallyltransferase from Streptococcus pneumoniae (strain ATCC 700669 / Spain 23F-1).